A 194-amino-acid chain; its full sequence is Peptidyl-tRNA hydrolase (194 aa).

Tyrosine 16 lines the tRNA pocket. Residue histidine 21 is the Proton acceptor of the active site. Residues phenylalanine 67, asparagine 69, and asparagine 115 each coordinate tRNA.

The protein belongs to the PTH family. As to quaternary structure, monomer.

The protein localises to the cytoplasm. The catalysed reaction is an N-acyl-L-alpha-aminoacyl-tRNA + H2O = an N-acyl-L-amino acid + a tRNA + H(+). Its function is as follows. Hydrolyzes ribosome-free peptidyl-tRNAs (with 1 or more amino acids incorporated), which drop off the ribosome during protein synthesis, or as a result of ribosome stalling. Functionally, catalyzes the release of premature peptidyl moieties from peptidyl-tRNA molecules trapped in stalled 50S ribosomal subunits, and thus maintains levels of free tRNAs and 50S ribosomes. This is Peptidyl-tRNA hydrolase from Shigella boydii serotype 18 (strain CDC 3083-94 / BS512).